The chain runs to 179 residues: Ribosome-recycling factor (179 aa).

This sequence belongs to the RRF family.

It localises to the cytoplasm. Functionally, responsible for the release of ribosomes from messenger RNA at the termination of protein biosynthesis. May increase the efficiency of translation by recycling ribosomes from one round of translation to another. The sequence is that of Ribosome-recycling factor from Chlamydia trachomatis serovar A (strain ATCC VR-571B / DSM 19440 / HAR-13).